A 201-amino-acid polypeptide reads, in one-letter code: dCTP deaminase, dUMP-forming (201 aa).

DCTP is bound by residues 117 to 122, Asp-135, 143 to 145, Gln-163, Tyr-177, and Gln-188; these read RSSFGR and TLE. Catalysis depends on Glu-145, which acts as the Proton donor/acceptor.

It belongs to the dCTP deaminase family. As to quaternary structure, homotrimer.

It catalyses the reaction dCTP + 2 H2O = dUMP + NH4(+) + diphosphate. It functions in the pathway pyrimidine metabolism; dUMP biosynthesis; dUMP from dCTP: step 1/1. Bifunctional enzyme that catalyzes both the deamination of dCTP to dUTP and the hydrolysis of dUTP to dUMP without releasing the toxic dUTP intermediate. This Methanococcus aeolicus (strain ATCC BAA-1280 / DSM 17508 / OCM 812 / Nankai-3) protein is dCTP deaminase, dUMP-forming.